We begin with the raw amino-acid sequence, 818 residues long: Piwi-like protein (818 aa).

The region spanning 220 to 339 (RINRVLNDNS…ITGELCFLCG (120 aa)) is the PAZ domain. One can recognise a Piwi domain in the interval 501-800 (KIALVFVPDD…LAELIGKVHK (300 aa)).

It belongs to the argonaute family. Piwi subfamily.

This Dugesia japonica (Planarian) protein is Piwi-like protein (iwi).